The sequence spans 232 residues: Ribonuclease 3 (232 aa).

An RNase III domain is found at 6–135; it reads QDYLAKTYGI…FIGALYLDQG (130 aa). Glu-48 contacts Mg(2+). Asp-52 is an active-site residue. Mg(2+)-binding residues include Asp-121 and Glu-124. The active site involves Glu-124. The DRBM domain occupies 161-230; sequence DAKTSLQEFL…AKHALEKLRM (70 aa).

It belongs to the ribonuclease III family. As to quaternary structure, homodimer. Mg(2+) is required as a cofactor.

Its subcellular location is the cytoplasm. It catalyses the reaction Endonucleolytic cleavage to 5'-phosphomonoester.. Functionally, digests double-stranded RNA. Involved in the processing of primary rRNA transcript to yield the immediate precursors to the large and small rRNAs (23S and 16S). Processes some mRNAs, and tRNAs when they are encoded in the rRNA operon. Processes pre-crRNA and tracrRNA of type II CRISPR loci if present in the organism. This is Ribonuclease 3 from Limosilactobacillus fermentum (strain NBRC 3956 / LMG 18251) (Lactobacillus fermentum).